The following is a 20-amino-acid chain: Thylakoid lumenal 18.4 kDa protein (20 aa).

Its subcellular location is the plastid. The protein resides in the chloroplast thylakoid lumen. The sequence is that of Thylakoid lumenal 18.4 kDa protein from Spinacia oleracea (Spinach).